Consider the following 371-residue polypeptide: Queuine tRNA-ribosyltransferase (371 aa).

Aspartate 92 serves as the catalytic Proton acceptor. Substrate contacts are provided by residues 92 to 96, aspartate 147, glutamine 190, and glycine 217; that span reads DSGGF. Residues 248 to 254 form an RNA binding region; the sequence is GVGKPID. Aspartate 267 functions as the Nucleophile in the catalytic mechanism. Residues 272–276 are RNA binding; important for wobble base 34 recognition; the sequence is TRSGR.

This sequence belongs to the queuine tRNA-ribosyltransferase family. In terms of assembly, homodimer. Within each dimer, one monomer is responsible for RNA recognition and catalysis, while the other monomer binds to the replacement base PreQ1.

The catalysed reaction is 7-aminomethyl-7-carbaguanine + guanosine(34) in tRNA = 7-aminomethyl-7-carbaguanosine(34) in tRNA + guanine. The protein operates within tRNA modification; tRNA-queuosine biosynthesis. Catalyzes the base-exchange of a guanine (G) residue with the queuine precursor 7-aminomethyl-7-deazaguanine (PreQ1) at position 34 (anticodon wobble position) in tRNAs with GU(N) anticodons (tRNA-Asp, -Asn, -His and -Tyr). Catalysis occurs through a double-displacement mechanism. The nucleophile active site attacks the C1' of nucleotide 34 to detach the guanine base from the RNA, forming a covalent enzyme-RNA intermediate. The proton acceptor active site deprotonates the incoming PreQ1, allowing a nucleophilic attack on the C1' of the ribose to form the product. After dissociation, two additional enzymatic reactions on the tRNA convert PreQ1 to queuine (Q), resulting in the hypermodified nucleoside queuosine (7-(((4,5-cis-dihydroxy-2-cyclopenten-1-yl)amino)methyl)-7-deazaguanosine). This chain is Queuine tRNA-ribosyltransferase, found in Caulobacter vibrioides (strain ATCC 19089 / CIP 103742 / CB 15) (Caulobacter crescentus).